The primary structure comprises 179 residues: Diphosphoinositol polyphosphate phosphohydrolase 2 (179 aa).

Substrate is bound by residues Arg9, 17–19 (KKR), and 38–40 (SSR). The Nudix hydrolase domain occupies 17–143 (KKRAACLCFR…VHAEYLERLK (127 aa)). Residues Gly49 and Glu65 each coordinate Mg(2+). The short motif at 50-71 (GGVEPEEEPGGAAAREVYEEAG) is the Nudix box element. The Proton acceptor role is filled by Glu68. Residue Glu69 coordinates Mg(2+). Residues 88 to 90 (RKH), Arg114, and Lys132 each bind substrate.

It belongs to the Nudix hydrolase family. DIPP subfamily. Requires Mg(2+) as cofactor. Mn(2+) serves as cofactor.

The protein localises to the cytoplasm. It carries out the reaction diphospho-myo-inositol polyphosphate + H2O = myo-inositol polyphosphate + phosphate.. It catalyses the reaction 5-diphospho-1D-myo-inositol 1,2,3,4,6-pentakisphosphate + H2O = 1D-myo-inositol hexakisphosphate + phosphate + H(+). The catalysed reaction is 3,5-bis(diphospho)-1D-myo-inositol 1,2,4,6-tetrakisphosphate + H2O = 3-diphospho-1D-myo-inositol 1,2,4,5,6-pentakisphosphate + phosphate + 2 H(+). The enzyme catalyses 5-diphospho-1D-myo-inositol 1,3,4,6-tetrakisphosphate + H2O = 1D-myo-inositol 1,3,4,5,6-pentakisphosphate + phosphate + H(+). It carries out the reaction P(1),P(6)-bis(5'-adenosyl) hexaphosphate + H2O = 2 ATP + 2 H(+). It catalyses the reaction P(1),P(5)-bis(5'-adenosyl) pentaphosphate + H2O = ADP + ATP + 2 H(+). The catalysed reaction is 5-phospho-alpha-D-ribose 1-diphosphate + H2O = alpha-D-ribose 1,5-bisphosphate + phosphate + H(+). Functionally, cleaves the beta-phosphate from diphosphoinositol polyphosphates such as PP-InsP5 (diphosphoinositol pentakisphosphate), PP-InsP4 (diphosphoinositol tetrakisphosphate) and [PP]2-InsP4 (bisdiphosphoinositol tetrakisphosphate), suggesting that it may play a role in signal transduction. Diadenosine polyphosphates, particularly Ap6A (P(1),P(6)-bis(5a-adenosyl) hexaphosphate) and Ap5A (P(1),P(5)-bis(5'-adenosyl) pentaphosphate) are downstream effectors of a signaling cascade that regulates cardiac KATP channels, can also be substrates, although with lower preference than the diphosphoinositol polyphosphates. Can also catalyze the hydrolysis of 5-phosphoribose 1-diphosphate, generating the glycolytic activator ribose 1,5-bisphosphate. Does not play a role in U8 snoRNA decapping activity. Binds U8 snoRNA. This chain is Diphosphoinositol polyphosphate phosphohydrolase 2, found in Rattus norvegicus (Rat).